The chain runs to 233 residues: Homeobox protein Hox-B6b (233 aa).

An Antp-type hexapeptide motif is present at residues 136–141 (IYPWMQ). A DNA-binding region (homeobox) is located at residues 155 to 214 (GRRGRQTYTRYQTLELEKEFHFNRYLTRRRRIEISHALCLTERQIKIWFQNRRMKWKKEN). Positions 213–233 (ENKLLNPSKTPEEEEEAEKKS) are disordered. Residues 224-233 (EEEEEAEKKS) are compositionally biased toward acidic residues.

This sequence belongs to the Antp homeobox family.

Its subcellular location is the nucleus. Sequence-specific transcription factor which is part of a developmental regulatory system that provides cells with specific positional identities on the anterior-posterior axis. This Takifugu rubripes (Japanese pufferfish) protein is Homeobox protein Hox-B6b (hoxb6b).